The sequence spans 214 residues: uncharacterized protein (214 aa).

Residues 9-31 (FLYFAISVLVNLLFLKILYIYLF) form a helical membrane-spanning segment. A disordered region spans residues 53-74 (APPKKPGKPQKKVVKKKPEAVS). The segment covering 54-67 (PPKKPGKPQKKVVK) has biased composition (basic residues).

It is found in the membrane. This is an uncharacterized protein from Aquifex aeolicus (strain VF5).